Here is a 398-residue protein sequence, read N- to C-terminus: Alpha-ketoglutarate-dependent dioxygenase bsc9 (398 aa).

Residues histidine 167 and aspartate 169 each coordinate Fe cation. Threonine 212 is a binding site for 2-oxoglutarate. Histidine 365 is a binding site for Fe cation. Arginine 377 lines the 2-oxoglutarate pocket.

It belongs to the TfdA dioxygenase family. Fe(2+) is required as a cofactor.

It participates in mycotoxin biosynthesis. Alpha-ketoglutarate dependent dioxygenase; part of the gene cluster that mediates the biosynthesis of the diterpene glucoside brassicicene C. In the first step of the brassicicene C biosynthesis, the bifunctional diterpene synthase bsc8 that possesses both prenyl transferase and terpene cyclase activity, converts isopentenyl diphosphate and dimethylallyl diphosphate into geranylgeranyl diphosphate (GGDP) that is further converted into fusicocca-2,10(14)-diene, the first precursor for brassicicene C. Fusicocca-2,10(14)-diene is then substrate of cytochrome P450 monooxygenase bsc1 for hydroxylation at the C-8 position. Oxidation at C-16 position to aldehyde is then catalyzed by the cytochrome P450 monooyxygenase bsc7, yielding fusicocca-2,10(14)-diene-8-beta,16-diol. Follows the isomerization of the double bond and reduction of aldehyde to alcohol catalyzed by the short-chain dehydrogenase/reductase bsc3 to yield the diol compound fusicocca-1,10(14)-diene-8 beta,16-diol. The next step is the oxidation at the C-3 position of fusicocca-2,10(14)-diene-8-beta,16-diol catalyzed by the alpha-ketoglutarate dependent dioxygenase bsc9, to produce a triol compound. Methylation of the hydroxy group at position 16 is performed by the methyltransferase bsc6. 16-O-methylation is followed by oxidation at the C-13 position to ketone and an alkyl shift of the methyl group leads to brassicicene C. Although the probable acetyltransferase bsc4 is included in the gene cluster, no acetylation reactions are necessary for brassicicene C biosynthesis. However, the fact that brassicicene E, which is a structurally related compound having an acetoxy group at position 12, was previously isolated from another strain of A.brassicicola suggests that the ATCC 96836 strain might also produce a small amount of brassicicene E. This Alternaria brassicicola (Dark leaf spot agent) protein is Alpha-ketoglutarate-dependent dioxygenase bsc9.